Reading from the N-terminus, the 417-residue chain is Histidine--tRNA ligase (417 aa).

The protein belongs to the class-II aminoacyl-tRNA synthetase family. Homodimer.

Its subcellular location is the cytoplasm. It carries out the reaction tRNA(His) + L-histidine + ATP = L-histidyl-tRNA(His) + AMP + diphosphate + H(+). The polypeptide is Histidine--tRNA ligase (Oleidesulfovibrio alaskensis (strain ATCC BAA-1058 / DSM 17464 / G20) (Desulfovibrio alaskensis)).